Here is a 442-residue protein sequence, read N- to C-terminus: Trigger factor (442 aa).

The PPIase FKBP-type domain maps to 163-248 (GDQVVIDFLG…IKEVKAPKAA (86 aa)).

Belongs to the FKBP-type PPIase family. Tig subfamily.

It localises to the cytoplasm. The enzyme catalyses [protein]-peptidylproline (omega=180) = [protein]-peptidylproline (omega=0). In terms of biological role, involved in protein export. Acts as a chaperone by maintaining the newly synthesized protein in an open conformation. Functions as a peptidyl-prolyl cis-trans isomerase. The chain is Trigger factor from Dinoroseobacter shibae (strain DSM 16493 / NCIMB 14021 / DFL 12).